Here is a 77-residue protein sequence, read N- to C-terminus: Antitoxin VapB2 (77 aa).

The SpoVT-AbrB domain occupies 4-46 (ASVFMTNRSQAVRLPAEVRFSEEIKKLSVRVSGSDRILSPLNQ).

Belongs to the VapB family. As to quaternary structure, probably forms a complex with cognate toxin VapC2.

Its function is as follows. Antitoxin component of a type II toxin-antitoxin (TA) system. Neutralizes the effect of cognate toxin VapC2 but not non-cognate toxin VapC2. In Haemophilus influenzae (strain 86-028NP), this protein is Antitoxin VapB2.